We begin with the raw amino-acid sequence, 614 residues long: MALRARALYDFKSENPGEISLREHEVLSLCSEQDIEGWLEGINSRGDRGLFPASYVQVIRAPEPGPPADGGPGAPARYANVPPGGFEPLPAAPPAAFPPLLQPQASPGSFQPPGAGFPYGGGALQPSPQQLYGGYQASLGSDDDWDDEWDDSSTVADEPGALGSGAYPDLDGSSSAGGGAAGRYRLSTRSDLSLGSRGVSAPPAPSVWSQELGHGEPQPQSLLHLRQVGRGGLRAGRGVRLREGWGQAVRGAGSYGPEWQENPYPFQCTIDDPTKQTKFKGMKSYISYKLVPTHTQVPVHRRYKHFDWLYARLAEKFPVISVPHLPEKQATGRFEEDFISKRRKGLIWWMNHMASHPVLAQCDVFQHFLTCPSSTDEKAWKQGKRKAEKDEMVGANFFLTLSTPPAAALDLQEVESKIDGFKCFTKKMDDSALQLNHTANEFARKQVTGFKKEYQKVGQSFRGLSQAFELDQQAFSVGLNQAIAFTGDAYDAIGELFAEQPRQDLDPVMDLLALYQGHLANFPDIIHVQKGALTKVKESRRHVEEGKMEVQKADGIQDRCNTISFATLAEIHHFHQIRVRDFKSQMQHFLQQQIIFFQKVTQKLEEALHKYDSV.

Positions 1-61 constitute an SH3 domain; the sequence is MALRARALYD…PASYVQVIRA (61 aa). A disordered region spans residues 85-218; sequence GFEPLPAAPP…SQELGHGEPQ (134 aa). Residues 90 to 101 show a composition bias toward pro residues; sequence PAAPPAAFPPLL. Residues 141–151 are compositionally biased toward acidic residues; it reads SDDDWDDEWDD. The 111-residue stretch at 266-376 folds into the PX domain; that stretch reads FQCTIDDPTK…HFLTCPSSTD (111 aa). A 1,2-diacyl-sn-glycero-3-phospho-(1D-myo-inositol-4,5-bisphosphate)-binding residues include Arg-302, Lys-304, and Arg-342. In terms of domain architecture, BAR spans 411–614; that stretch reads LQEVESKIDG…EEALHKYDSV (204 aa).

This sequence belongs to the sorting nexin family. As to quaternary structure, heterodimer with SNX9. Interacts with ITCH. Interacts with dynamin-2 (DNM2), SYNJ1 and WASL. Interacts with the AP-1 complex. Interacts with FCHSD1 (via the F-BAR domain).

The protein localises to the endomembrane system. It is found in the endosome membrane. The protein resides in the recycling endosome membrane. It localises to the cell membrane. Its subcellular location is the cytoplasmic vesicle membrane. Functionally, involved in endocytosis and intracellular vesicle trafficking, both during interphase and at the end of mitosis. Required for efficient progress through mitosis and cytokinesis. Required for normal formation of the cleavage furrow at the end of mitosis. Plays a role in endocytosis via clathrin-coated pits, but also clathrin-independent, actin-dependent fluid-phase endocytosis. Plays a role in macropinocytosis. Binds to membranes enriched in phosphatidylinositol 4,5-bisphosphate and promotes membrane tubulation. Stimulates the GTPase activity of DNM2. Promotes DNM2 location at the plasma membrane. Together with DNM2, involved in autophagosome assembly by regulating trafficking from recycling endosomes of phospholipid scramblase ATG9A. This chain is Sorting nexin-18, found in Mus musculus (Mouse).